A 7756-amino-acid polypeptide reads, in one-letter code: Linear gramicidin synthase subunit C (7756 aa).

Carrier domains follow at residues 977-1052 (EPRN…AALQ), 2042-2116 (APAT…ADSS), 3557-3632 (APRT…ASLL), 4621-4695 (APAT…TVTD), 6141-6216 (APRK…AGLL), and 7200-7274 (APET…GDSV). An O-(pantetheine 4'-phosphoryl)serine mark is found at serine 1012, serine 2077, serine 3592, serine 4656, serine 6176, and serine 7235.

This sequence belongs to the ATP-dependent AMP-binding enzyme family. In terms of assembly, large multienzyme complex composed of 4 subunits; LgrA, LgrB, LgrC and LgrD. Pantetheine 4'-phosphate is required as a cofactor.

Functionally, activates the 7th to 12th amino acids (Val, D-Val, Trp, D-Leu, Xaa and D-Leu) in linear gramicidin and catalyzes the formation of the peptide bond between them. This enzyme is also responsible for the epimerization of the 8th (D-Val), the 10th (D-Leu) and 12th (D-Leu) amino acids. The 11th (Xaa) amino acid is Trp in linear gramicidin A; Phe in linear gramicidin B and Tyr in linear gramicidin C. The chain is Linear gramicidin synthase subunit C (lgrC) from Brevibacillus parabrevis.